A 103-amino-acid polypeptide reads, in one-letter code: Co-chaperonin GroES (103 aa).

This sequence belongs to the GroES chaperonin family. In terms of assembly, heptamer of 7 subunits arranged in a ring. Interacts with the chaperonin GroEL.

The protein resides in the cytoplasm. Together with the chaperonin GroEL, plays an essential role in assisting protein folding. The GroEL-GroES system forms a nano-cage that allows encapsulation of the non-native substrate proteins and provides a physical environment optimized to promote and accelerate protein folding. GroES binds to the apical surface of the GroEL ring, thereby capping the opening of the GroEL channel. This Synechococcus elongatus (strain ATCC 33912 / PCC 7942 / FACHB-805) (Anacystis nidulans R2) protein is Co-chaperonin GroES.